Here is a 346-residue protein sequence, read N- to C-terminus: N-acetyl-gamma-glutamyl-phosphate reductase (346 aa).

Residue Cys-149 is part of the active site.

Belongs to the NAGSA dehydrogenase family. Type 1 subfamily.

The protein resides in the cytoplasm. The enzyme catalyses N-acetyl-L-glutamate 5-semialdehyde + phosphate + NADP(+) = N-acetyl-L-glutamyl 5-phosphate + NADPH + H(+). Its pathway is amino-acid biosynthesis; L-arginine biosynthesis; N(2)-acetyl-L-ornithine from L-glutamate: step 3/4. In terms of biological role, catalyzes the NADPH-dependent reduction of N-acetyl-5-glutamyl phosphate to yield N-acetyl-L-glutamate 5-semialdehyde. This Citrifermentans bemidjiense (strain ATCC BAA-1014 / DSM 16622 / JCM 12645 / Bem) (Geobacter bemidjiensis) protein is N-acetyl-gamma-glutamyl-phosphate reductase.